The chain runs to 493 residues: Cytochrome P450 monooxygenase esdpG (493 aa).

A helical membrane pass occupies residues 10–30 (VLGVTWLSALFTLGSLSVFWL). Cys434 contacts heme.

Belongs to the cytochrome P450 family. The cofactor is heme.

Its subcellular location is the membrane. Its pathway is secondary metabolite biosynthesis; terpenoid biosynthesis. Cytochrome P450 monooxygenasee; part of the cluster that mediates the biosynthesis of shearones, diterpenoid pyrones (DPs) which are structurally diverse meroterpenoids consisting of a diterpene linked by a pyrone, and which may exhibit a range of bioactivities. Whitin the pathway, esdpG takes part in the molecular scaffold modification via the hydroxylation at C-11 and C-12 and can transform shearone A into shearone C and shearone B into shearone D. The molecular scaffold is commonly biosynthesized by a series of enzymes including the non-reducing polyketide synthase (NR-PKS) esdpA that generates an alpha-pyrone; the prenyltransferase esdpC that attaches a geranylgeranyl pyrophosphate (GGPP) produced by the GGPP synthase (GGPPS) esdpD onto the pyrone unit; the FAD-dependent monooxygenase esdpE that converts an olefin on the diterpene unit into an epoxide; and the terpene cyclase esdpB that catalyzes the cyclization reactions to give the molecular backbone shearone A. In the modification steps, esdpF oxidizes the hydroxy group to a ketone at C-3 and esdpG then attaches hydroxy groups at both C-11 and C-12. After that, esdpI hydroxylates at C-20 and esdpH hydroxylates at C-6'. The ether bridge is generated by nucleophilic attack of the hydroxy group at C-20 to the carbonyl carbon at C-3. EsdpH can also functions prior to esdpI. The different combinations of these modification enzymes lead to the production of diverse shearone derivatives, shearone I being the end product of the pathway. The alpha-ketoglutarate-dependent dioxygenase esdpJ seems not to be involved in this pathway. The sequence is that of Cytochrome P450 monooxygenase esdpG from Penicillium shearii (Eupenicillium shearii).